The sequence spans 190 residues: Putative glutathione-dependent formaldehyde-activating enzyme (190 aa).

The 147-residue stretch at 19–165 folds into the CENP-V/GFA domain; the sequence is FKGGKLYCHC…FRKVGLQPYD (147 aa). C26, C28, C47, C49, C52, C94, and C97 together coordinate Zn(2+).

The protein belongs to the Gfa family. Zn(2+) is required as a cofactor.

It catalyses the reaction S-(hydroxymethyl)glutathione = glutathione + formaldehyde. It participates in one-carbon metabolism; formaldehyde degradation; formate from formaldehyde (glutathione route): step 1/3. Its function is as follows. Catalyzes the condensation of formaldehyde and glutathione to S-hydroxymethylglutathione. This is Putative glutathione-dependent formaldehyde-activating enzyme from Pyrenophora teres f. teres (strain 0-1) (Barley net blotch fungus).